Reading from the N-terminus, the 171-residue chain is Endoribonuclease YbeY (171 aa).

Residues histidine 126, histidine 130, and histidine 136 each contribute to the Zn(2+) site.

It belongs to the endoribonuclease YbeY family. The cofactor is Zn(2+).

The protein localises to the cytoplasm. Functionally, single strand-specific metallo-endoribonuclease involved in late-stage 70S ribosome quality control and in maturation of the 3' terminus of the 16S rRNA. This Rhizobium leguminosarum bv. trifolii (strain WSM2304) protein is Endoribonuclease YbeY.